The primary structure comprises 429 residues: Serine hydroxymethyltransferase (429 aa).

(6S)-5,6,7,8-tetrahydrofolate contacts are provided by residues Leu126 and 130–132; that span reads GHL. N6-(pyridoxal phosphate)lysine is present on Lys235.

The protein belongs to the SHMT family. As to quaternary structure, homodimer. Requires pyridoxal 5'-phosphate as cofactor.

It is found in the cytoplasm. It catalyses the reaction (6R)-5,10-methylene-5,6,7,8-tetrahydrofolate + glycine + H2O = (6S)-5,6,7,8-tetrahydrofolate + L-serine. The protein operates within one-carbon metabolism; tetrahydrofolate interconversion. Its pathway is amino-acid biosynthesis; glycine biosynthesis; glycine from L-serine: step 1/1. Its function is as follows. Catalyzes the reversible interconversion of serine and glycine with tetrahydrofolate (THF) serving as the one-carbon carrier. This reaction serves as the major source of one-carbon groups required for the biosynthesis of purines, thymidylate, methionine, and other important biomolecules. Also exhibits THF-independent aldolase activity toward beta-hydroxyamino acids, producing glycine and aldehydes, via a retro-aldol mechanism. The sequence is that of Serine hydroxymethyltransferase from Zymomonas mobilis subsp. mobilis (strain ATCC 31821 / ZM4 / CP4).